We begin with the raw amino-acid sequence, 327 residues long: tRNA N6-adenosine threonylcarbamoyltransferase (327 aa).

Residues histidine 109 and histidine 113 each coordinate Fe cation. Substrate-binding positions include 132–136 (MVSGG), aspartate 165, glycine 178, aspartate 182, and asparagine 268. Residue aspartate 296 participates in Fe cation binding.

This sequence belongs to the KAE1 / TsaD family. Fe(2+) is required as a cofactor.

It is found in the cytoplasm. The catalysed reaction is L-threonylcarbamoyladenylate + adenosine(37) in tRNA = N(6)-L-threonylcarbamoyladenosine(37) in tRNA + AMP + H(+). Required for the formation of a threonylcarbamoyl group on adenosine at position 37 (t(6)A37) in tRNAs that read codons beginning with adenine. Is involved in the transfer of the threonylcarbamoyl moiety of threonylcarbamoyl-AMP (TC-AMP) to the N6 group of A37, together with TsaE and TsaB. TsaD likely plays a direct catalytic role in this reaction. This Thermotoga neapolitana (strain ATCC 49049 / DSM 4359 / NBRC 107923 / NS-E) protein is tRNA N6-adenosine threonylcarbamoyltransferase.